The chain runs to 185 residues: Uroplakin-2 (185 aa).

Residues 1-26 (MASPWPVWTLSWILILLAVLVPGAAA) form the signal peptide. Positions 27 to 85 (DFNISSLSGLLSPVMTESLLVALPPCHLTGGNATLTVRRANDSKVVRSSFVVPPCRGRR) are excised as a propeptide. N-linked (GlcNAc...) asparagine glycans are attached at residues Asn29, Asn58, and Asn67. Over 86–156 (ELVSVVDSGS…IGLAMARTGG (71 aa)) the chain is Lumenal. A helical transmembrane segment spans residues 157 to 177 (MVVITVLLSVAMFLLVLGLII). Residues 178 to 185 (ALALGARK) are Cytoplasmic-facing.

This sequence belongs to the uroplakin-2 family. Interacts with uroplakin-1a (UPK1A). As to expression, bladder epithelium.

The protein resides in the cell membrane. In terms of biological role, component of the asymmetric unit membrane (AUM); a highly specialized biomembrane elaborated by terminally differentiated urothelial cells. May play an important role in regulating the assembly of the AUM. This chain is Uroplakin-2 (UPK2), found in Bos taurus (Bovine).